Reading from the N-terminus, the 323-residue chain is MYHNSSQKRHWTFSSEEQLARLRADANRKFRCKAVANGKVLPNDPVFLEPHEEMTLCKYYEKRLLEFCSVFKPAMPRSVVGTACMYFKRFYLNNSVMEYHPRIIMLTCAFLACKVDEFNVSSPQFVGNLRESPLGQEKALEQILEYELLLIQQLNFHLIVHNPYRPFEGFLIDLKTRYPILENPEILRKTADDFLNRIALTDAYLLYTPSQIALTAILSSASRAGITMESYLSESLMLRENRTCLSQLLDIMKSMRNLVKKYEPPRSEEVAVLKQKLERCHSAELALNVITKKRKGYEDDDYVPKKSKHEEEEWTDDDLVESL.

Phosphoserine; by CDK8 is present on Ser5. A Phosphoserine modification is found at Ser132. The segment at 299 to 323 (DDDYVPKKSKHEEEEWTDDDLVESL) is disordered. The segment covering 302–311 (YVPKKSKHEE) has biased composition (basic and acidic residues). Positions 312–323 (EEWTDDDLVESL) are enriched in acidic residues. Thr315 carries the phosphothreonine modification. Phosphoserine is present on Ser322.

This sequence belongs to the cyclin family. Cyclin C subfamily. In terms of assembly, associates primarily with CDK7 and MAT1 to form the CAK complex. CAK can further associate with the core-TFIIH to form the TFIIH basal transcription factor.

The protein localises to the nucleus. In terms of biological role, regulates CDK7, the catalytic subunit of the CDK-activating kinase (CAK) enzymatic complex. CAK activates the cyclin-associated kinases CDK1, CDK2, CDK4 and CDK6 by threonine phosphorylation. CAK complexed to the core-TFIIH basal transcription factor activates RNA polymerase II by serine phosphorylation of the repetitive C-terminal domain (CTD) of its large subunit (POLR2A), allowing its escape from the promoter and elongation of the transcripts. Involved in cell cycle control and in RNA transcription by RNA polymerase II. Its expression and activity are constant throughout the cell cycle. The sequence is that of Cyclin-H (CCNH) from Macaca fascicularis (Crab-eating macaque).